A 209-amino-acid polypeptide reads, in one-letter code: Glutathione S-transferase 1-1 (209 aa).

One can recognise a GST N-terminal domain in the interval 1-81; it reads MADFYYLPGS…YLVEKYGKTD (81 aa). Glutathione contacts are provided by residues S10, 51–53, and 65–67; these read HTI and ESR. The GST C-terminal domain occupies 87-209; that stretch reads CPKKRAVINQ…GCLEFKKFFE (123 aa).

This sequence belongs to the GST superfamily. Theta family. As to quaternary structure, homodimer.

The catalysed reaction is RX + glutathione = an S-substituted glutathione + a halide anion + H(+). It carries out the reaction 1,1,1-trichloro-2,2-bis(4-chlorophenyl)ethane = 1,1-dichloro-2,2-bis(4-chlorophenyl)ethylene + chloride + H(+). In terms of biological role, conjugation of reduced glutathione to a wide number of exogenous and endogenous hydrophobic electrophiles. Has DDT dehydrochlorinase activity. This chain is Glutathione S-transferase 1-1 (GstD1), found in Drosophila sechellia (Fruit fly).